The primary structure comprises 374 residues: Probable dual-specificity RNA methyltransferase RlmN 3 (374 aa).

The Proton acceptor role is filled by Glu-96. In terms of domain architecture, Radical SAM core spans 110-350 (DHSRKTICIS…VTLRREKGHD (241 aa)). Cysteines 117 and 355 form a disulfide. Cys-124, Cys-128, and Cys-131 together coordinate [4Fe-4S] cluster. S-adenosyl-L-methionine-binding positions include 181–182 (GE), Ser-213, 236–238 (SLH), and Asn-312. Catalysis depends on Cys-355, which acts as the S-methylcysteine intermediate.

Belongs to the radical SAM superfamily. RlmN family. [4Fe-4S] cluster is required as a cofactor.

The protein localises to the cytoplasm. The catalysed reaction is adenosine(2503) in 23S rRNA + 2 reduced [2Fe-2S]-[ferredoxin] + 2 S-adenosyl-L-methionine = 2-methyladenosine(2503) in 23S rRNA + 5'-deoxyadenosine + L-methionine + 2 oxidized [2Fe-2S]-[ferredoxin] + S-adenosyl-L-homocysteine. The enzyme catalyses adenosine(37) in tRNA + 2 reduced [2Fe-2S]-[ferredoxin] + 2 S-adenosyl-L-methionine = 2-methyladenosine(37) in tRNA + 5'-deoxyadenosine + L-methionine + 2 oxidized [2Fe-2S]-[ferredoxin] + S-adenosyl-L-homocysteine. Functionally, specifically methylates position 2 of adenine 2503 in 23S rRNA and position 2 of adenine 37 in tRNAs. This Opitutus terrae (strain DSM 11246 / JCM 15787 / PB90-1) protein is Probable dual-specificity RNA methyltransferase RlmN 3.